The following is a 229-amino-acid chain: Triosephosphate isomerase (229 aa).

Residue Asn6–Lys8 participates in substrate binding. His85 serves as the catalytic Electrophile. Glu152 (proton acceptor) is an active-site residue. Residues Gly158 and Ser188 each contribute to the substrate site.

It belongs to the triosephosphate isomerase family. Homodimer.

Its subcellular location is the cytoplasm. It catalyses the reaction D-glyceraldehyde 3-phosphate = dihydroxyacetone phosphate. The protein operates within carbohydrate biosynthesis; gluconeogenesis. It functions in the pathway carbohydrate degradation; glycolysis; D-glyceraldehyde 3-phosphate from glycerone phosphate: step 1/1. In terms of biological role, involved in the gluconeogenesis. Catalyzes stereospecifically the conversion of dihydroxyacetone phosphate (DHAP) to D-glyceraldehyde-3-phosphate (G3P). This chain is Triosephosphate isomerase, found in Campylobacter curvus (strain 525.92).